The chain runs to 959 residues: Translation initiation factor IF-2 (959 aa).

Positions 1 to 10 (MSDKTNDDKT) are enriched in basic and acidic residues. Positions 1–374 (MSDKTNDDKT…SQMQETREKI (374 aa)) are disordered. Residues 27 to 37 (EQSTVRQNFSH) are compositionally biased toward polar residues. Low complexity-rich tracts occupy residues 63-118 (AAAA…VTKP) and 128-138 (QRPGGQQAQRP). 2 stretches are compositionally biased toward basic and acidic residues: residues 154 to 225 (SEMD…EAAK) and 232 to 241 (ARSERRDDAR). Residues 246 to 284 (GARPQQAGRPQGGRPQPAGRPQQGSPRPAPIIADAAPIA) are compositionally biased toward low complexity. Basic and acidic residues predominate over residues 318–333 (PEVRAPKVVKGEDDRR). One can recognise a tr-type G domain in the interval 457–626 (SRPPVVTIMG…LLQAEMLDLK (170 aa)). Residues 466 to 473 (GHVDHGKT) are G1. Residue 466 to 473 (GHVDHGKT) participates in GTP binding. The G2 stretch occupies residues 491 to 495 (GITQH). Residues 512-515 (DTPG) are G3. GTP is bound by residues 512 to 516 (DTPGH) and 566 to 569 (NKID). Residues 566-569 (NKID) form a G4 region. A G5 region spans residues 602 to 604 (SAK).

Belongs to the TRAFAC class translation factor GTPase superfamily. Classic translation factor GTPase family. IF-2 subfamily.

The protein resides in the cytoplasm. Functionally, one of the essential components for the initiation of protein synthesis. Protects formylmethionyl-tRNA from spontaneous hydrolysis and promotes its binding to the 30S ribosomal subunits. Also involved in the hydrolysis of GTP during the formation of the 70S ribosomal complex. This is Translation initiation factor IF-2 from Brucella ovis (strain ATCC 25840 / 63/290 / NCTC 10512).